The primary structure comprises 200 residues: Protein GrpE (200 aa).

Positions 1–12 (MSNEEIKNKDEQ) are enriched in basic and acidic residues. The tract at residues 1–30 (MSNEEIKNKDEQLQQDAVETEAEVVGTDAD) is disordered.

The protein belongs to the GrpE family. As to quaternary structure, homodimer.

Its subcellular location is the cytoplasm. Functionally, participates actively in the response to hyperosmotic and heat shock by preventing the aggregation of stress-denatured proteins, in association with DnaK and GrpE. It is the nucleotide exchange factor for DnaK and may function as a thermosensor. Unfolded proteins bind initially to DnaJ; upon interaction with the DnaJ-bound protein, DnaK hydrolyzes its bound ATP, resulting in the formation of a stable complex. GrpE releases ADP from DnaK; ATP binding to DnaK triggers the release of the substrate protein, thus completing the reaction cycle. Several rounds of ATP-dependent interactions between DnaJ, DnaK and GrpE are required for fully efficient folding. In Vibrio cholerae serotype O1 (strain ATCC 39315 / El Tor Inaba N16961), this protein is Protein GrpE.